Consider the following 101-residue polypeptide: Large ribosomal subunit protein bL21 (101 aa).

It belongs to the bacterial ribosomal protein bL21 family. As to quaternary structure, part of the 50S ribosomal subunit. Contacts protein L20.

Functionally, this protein binds to 23S rRNA in the presence of protein L20. This chain is Large ribosomal subunit protein bL21, found in Corynebacterium aurimucosum (strain ATCC 700975 / DSM 44827 / CIP 107346 / CN-1) (Corynebacterium nigricans).